The primary structure comprises 616 residues: Protein cereblon (616 aa).

3 disordered regions span residues 1 to 39, 63 to 137, and 182 to 220; these read MDEE…DDSV, FGPS…AMPR, and SQER…DIDM. Over residues 11–32 the composition is skewed to low complexity; it reads AQEQEVAGSAGEAAAGPSGAEV. A compositionally biased stretch (acidic residues) spans 96 to 107; the sequence is SEEDIVLDDGTE. Over residues 183-192 the composition is skewed to basic and acidic residues; it reads QERRRSRNSD. Residues 194 to 203 are compositionally biased toward acidic residues; that stretch reads VSPEAEDDEL. The segment covering 206-215 has biased composition (pro residues); the sequence is HPPPPPPRPP. One can recognise a Lon N-terminal domain in the interval 257-482; it reads HMLIFLHQYI…LIGGILKEET (226 aa). One can recognise a CULT domain in the interval 481-590; it reads ETLFYCRYCN…LAGSSVRIGK (110 aa). Zn(2+)-binding residues include C486, C489, C555, and C558.

The protein belongs to the CRBN family. Likely a component of a DCX (DDB1-CUL4-X-box) protein ligase complex. May interact with pic/DDB1. Post-translationally, ubiquitinated.

The protein resides in the nucleus. It functions in the pathway protein modification; protein ubiquitination. Its function is as follows. Substrate recognition component of a DCX (DDB1-CUL4-X-box) E3 protein ligase complex that mediates the ubiquitination and subsequent proteasomal degradation of target proteins. Has an essential role in mediating growth by negatively regulating insulin signaling. It also has a role in maintaining presynaptic function in the neuromuscular junction synapses of third-instar larvae. The chain is Protein cereblon from Drosophila persimilis (Fruit fly).